Here is a 158-residue protein sequence, read N- to C-terminus: Ribonuclease H (158 aa).

The region spanning 2–143 (PEKIIELFTD…VDALLNRVMD (142 aa)) is the RNase H type-1 domain. Mg(2+) contacts are provided by aspartate 11, glutamate 49, aspartate 71, and aspartate 135.

This sequence belongs to the RNase H family. In terms of assembly, monomer. It depends on Mg(2+) as a cofactor.

It localises to the cytoplasm. The catalysed reaction is Endonucleolytic cleavage to 5'-phosphomonoester.. Functionally, endonuclease that specifically degrades the RNA of RNA-DNA hybrids. This is Ribonuclease H from Acidithiobacillus ferrooxidans (strain ATCC 23270 / DSM 14882 / CIP 104768 / NCIMB 8455) (Ferrobacillus ferrooxidans (strain ATCC 23270)).